We begin with the raw amino-acid sequence, 332 residues long: Formamidase (332 aa).

Residues Phe-14–Pro-259 enclose the CN hydrolase domain. Glu-60 (proton acceptor) is an active-site residue. The Proton donor role is filled by Lys-132. Cys-165 functions as the Nucleophile in the catalytic mechanism.

Belongs to the carbon-nitrogen hydrolase superfamily. Aliphatic amidase family.

It carries out the reaction formamide + H2O = formate + NH4(+). Functionally, is an aliphatic amidase with a restricted substrate specificity, as it only hydrolyzes formamide. The chain is Formamidase from Bacillus cereus (strain G9842).